Reading from the N-terminus, the 1022-residue chain is Collagen alpha-1(I) chain (1022 aa).

The disordered stretch occupies residues 1 to 1022 (SAGGISVPGP…PGPPGPPGPP (1022 aa)). 4-hydroxyproline is present on residues Pro-20, Pro-23, Pro-26, Pro-35, Pro-38, Pro-41, Pro-56, Pro-71, Pro-77, Pro-86, and Pro-92. Positions 28–47 (PQGFQGPPGEPGEPGASGPM) are enriched in low complexity. Residues 59 to 73 (NGDDGEAGKPGRPGE) are compositionally biased toward basic and acidic residues. Lys-95 bears the 5-hydroxylysine; alternate mark. Lys-95 carries an O-linked (Gal...) hydroxylysine; alternate glycan. Ser-101 is modified (phosphoserine). The segment covering 109-125 (DAGPAGPKGEPGSPGEN) has biased composition (low complexity). 4-hydroxyproline is present on residues Pro-119, Pro-122, Pro-128, Pro-137, Pro-143, Pro-164, Pro-173, Pro-176, Pro-203, Pro-206, Pro-218, Pro-224, Pro-233, Pro-239, Pro-242, and Pro-257. The segment covering 143–161 (PGASGPAGARGNDGAAGAA) has biased composition (low complexity). The span at 163–175 (PPGPTGPAGPPGF) shows a compositional bias: pro residues. The segment covering 209–259 (AGAAGPAGNPGADGQPGAKGANGAPGIAGAPGFPGARGPSGPQGPSGAPGP) has biased composition (low complexity). Lys-260 is modified (5-hydroxylysine). 8 positions are modified to 4-hydroxyproline: Pro-266, Pro-269, Pro-281, Pro-290, Pro-305, Pro-311, Pro-320, and Pro-326. Residues 315-324 (GERGGPGSRG) are compositionally biased toward gly residues. The residue at position 335 (Lys-335) is a 5-hydroxylysine. Pro-344, Pro-353, Pro-359, Pro-365, Pro-374, Pro-377, Pro-386, Pro-395, Pro-401, Pro-413, Pro-422, Pro-431, Pro-434, Pro-452, Pro-470, Pro-476, Pro-482, Pro-488, Pro-494, Pro-500, Pro-512, Pro-521, Pro-533, Pro-545, Pro-548, Pro-554, Pro-560, and Pro-569 each carry 4-hydroxyproline. A compositionally biased stretch (low complexity) spans 368 to 394 (KGLTGSPGSPGPDGKTGPPGPAGQDGR). Residues 403–422 (ARGQAGVMGFPGPKGAAGEP) show a composition bias toward low complexity. Residues 464–491 (QGPAGSPGFQGLPGPAGPPGEAGKPGEQ) are compositionally biased toward low complexity. Over residues 530-557 (NGAPGNDGAKGDAGAPGAPGSQGAPGLQ) the composition is skewed to low complexity. Residue Lys-581 is modified to 5-hydroxylysine. Pro-587, Pro-602, and Pro-608 each carry 4-hydroxyproline. Low complexity predominate over residues 614 to 628 (SGPSGPAGPTGARGA). A Phosphoserine modification is found at Ser-617. Residues Pro-629, Pro-635, Pro-638, Pro-647, Pro-653, Pro-671, Pro-680, and Pro-689 each carry the 4-hydroxyproline modification. Residues 641 to 668 (AGFAGPPGADGQPGAKGEPGDAGAKGDA) show a composition bias toward low complexity. Pro residues predominate over residues 670 to 682 (PPGPAGPTGPPGP). A 5-hydroxylysine modification is found at Lys-692. Residues 697-713 (SAGPPGATGFPGAAGRV) are compositionally biased toward low complexity. 4-hydroxyproline occurs at positions 701 and 707. Pro-715 carries the 3-hydroxyproline modification. 4-hydroxyproline is present on residues Pro-716, Pro-725, Pro-728, Pro-749, Pro-758, Pro-767, Pro-776, Pro-794, Pro-803, Pro-806, Pro-812, Pro-827, Pro-833, Pro-839, Pro-848, and Pro-854. The segment covering 742–751 (ETGPAGRPGE) has biased composition (low complexity). Residues 761 to 776 (TGEKGSPGADGPAGAP) show a composition bias toward low complexity. Residues 826-836 (PPGPVGPPGLA) show a composition bias toward pro residues. A compositionally biased stretch (low complexity) spans 838 to 853 (PPGESGREGSPGAEGS). At Lys-863 the chain carries 5-hydroxylysine. Residues 872 to 887 (AGPPGAPGAPGAPGPV) show a composition bias toward pro residues. Residues Pro-875, Pro-878, and Pro-881 each carry the 4-hydroxyproline modification. Over residues 908 to 922 (AGPAGARGPAGPQGP) the composition is skewed to low complexity. Positions 923 to 937 (RGDKGETGEQGDRGI) are enriched in basic and acidic residues. Residue Lys-926 is modified to 5-hydroxylysine. The residue at position 938 (Lys-938) is a 5-hydroxylysine; alternate. Lys-938 is a glycosylation site (O-linked (Gal...) hydroxylysine; alternate). Pro-953, Pro-956, Pro-974, and Pro-989 each carry 4-hydroxyproline. Over residues 956 to 989 (PGEQGPSGASGPAGPRGPPGSAGSPGKDGLNGLP) the composition is skewed to low complexity. Pro-994 is modified (3-hydroxyproline). 4-hydroxyproline is present on Pro-995. A compositionally biased stretch (pro residues) spans 1007-1022 (VGPPGPPGPPGPPGPP). Pro-1009 carries the 3-hydroxyproline modification. Residue Pro-1010 is modified to 4-hydroxyproline. Pro-1012 bears the 3-hydroxyproline mark. Pro-1013 is subject to 4-hydroxyproline. Pro-1015 is subject to 3-hydroxyproline. Pro-1016, Pro-1019, and Pro-1022 each carry 4-hydroxyproline.

The protein belongs to the fibrillar collagen family. As to quaternary structure, trimers of one alpha 2(I) and two alpha 1(I) chains. In terms of processing, prolines at the third position of the tripeptide repeating unit (G-X-Y) are hydroxylated in some or all of the chains. In terms of tissue distribution, expressed in bone.

It is found in the secreted. The protein resides in the extracellular space. It localises to the extracellular matrix. Type I collagen is a member of group I collagen (fibrillar forming collagen). This Mylodon darwinii (Giant ground sloth) protein is Collagen alpha-1(I) chain.